Reading from the N-terminus, the 198-residue chain is UPF0098 protein PH1269 (198 aa).

The protein belongs to the UPF0098 family.

The protein is UPF0098 protein PH1269 of Pyrococcus horikoshii (strain ATCC 700860 / DSM 12428 / JCM 9974 / NBRC 100139 / OT-3).